Consider the following 66-residue polypeptide: Large ribosomal subunit protein bL35 (66 aa).

It belongs to the bacterial ribosomal protein bL35 family.

The sequence is that of Large ribosomal subunit protein bL35 from Deinococcus deserti (strain DSM 17065 / CIP 109153 / LMG 22923 / VCD115).